A 252-amino-acid polypeptide reads, in one-letter code: Indole-3-glycerol phosphate synthase (252 aa).

Belongs to the TrpC family.

The enzyme catalyses 1-(2-carboxyphenylamino)-1-deoxy-D-ribulose 5-phosphate + H(+) = (1S,2R)-1-C-(indol-3-yl)glycerol 3-phosphate + CO2 + H2O. Its pathway is amino-acid biosynthesis; L-tryptophan biosynthesis; L-tryptophan from chorismate: step 4/5. This chain is Indole-3-glycerol phosphate synthase, found in Listeria monocytogenes serotype 4b (strain CLIP80459).